The following is a 263-amino-acid chain: Undecaprenyl-diphosphatase 2 (263 aa).

The next 8 helical transmembrane spans lie at 15–37 (GLTE…LIGF), 42–62 (AKVF…VIFW), 79–99 (SLNL…GVLF), 107–127 (LFGP…MIVA), 142–162 (ITYK…WPGF), 183–203 (AEYT…LDLI), 216–236 (LFVT…VSFL), and 242–262 (VKLT…YFFI).

This sequence belongs to the UppP family.

The protein resides in the cell membrane. It carries out the reaction di-trans,octa-cis-undecaprenyl diphosphate + H2O = di-trans,octa-cis-undecaprenyl phosphate + phosphate + H(+). Functionally, catalyzes the dephosphorylation of undecaprenyl diphosphate (UPP). Confers resistance to bacitracin. The chain is Undecaprenyl-diphosphatase 2 from Bacillus cereus (strain ATCC 14579 / DSM 31 / CCUG 7414 / JCM 2152 / NBRC 15305 / NCIMB 9373 / NCTC 2599 / NRRL B-3711).